Consider the following 122-residue polypeptide: Fluoride-specific ion channel FluC (122 aa).

4 helical membrane passes run Leu-6–Val-26, Ser-33–Phe-53, Gly-60–Phe-80, and Leu-101–Phe-121. Na(+) contacts are provided by Gly-75 and Thr-78.

The protein belongs to the fluoride channel Fluc/FEX (TC 1.A.43) family.

It localises to the cell inner membrane. The catalysed reaction is fluoride(in) = fluoride(out). Its activity is regulated as follows. Na(+) is not transported, but it plays an essential structural role and its presence is essential for fluoride channel function. Functionally, fluoride-specific ion channel. Important for reducing fluoride concentration in the cell, thus reducing its toxicity. This chain is Fluoride-specific ion channel FluC, found in Campylobacter jejuni subsp. jejuni serotype O:6 (strain 81116 / NCTC 11828).